Consider the following 122-residue polypeptide: Large ribosomal subunit protein uL14 (122 aa).

Belongs to the universal ribosomal protein uL14 family. As to quaternary structure, part of the 50S ribosomal subunit. Forms a cluster with proteins L3 and L19. In the 70S ribosome, L14 and L19 interact and together make contacts with the 16S rRNA in bridges B5 and B8.

Binds to 23S rRNA. Forms part of two intersubunit bridges in the 70S ribosome. The polypeptide is Large ribosomal subunit protein uL14 (Chlorobium chlorochromatii (strain CaD3)).